A 382-amino-acid polypeptide reads, in one-letter code: MSLKEKTQSLFANAFGYPATHTIQAPGRVNLIGEHTDYNDGFVLPCAIDYQTVISCAPRDDRKVRVMAADYENQLDEFSLNAPIVAHENYQWANYVRGVVKHLQLRNNSFGGVDMVISGNVPQGAGLSSSASLEVAVGTVLQQLYHLPLDGAQIALNGQEAENQFVGCNCGIMDQLISALGKKDHSLLIDCRSLGTKAVSMPKGVAVVIINSNFKRTLVGSEYNTRREQCETGARFFQQPALRDVTIEEFNAVAHELDPIVAKRVRHILTENARTVEAASALEQGDLKRMGELMAESHASMRDDFEITVPQIDTLVEIVKAVIGDKGGVRMTGGGFGGCIVALIPEELVPAVQQAVAEQYEAKIGIKETFYVCKPSQGAGQC.

34–37 lines the substrate pocket; that stretch reads EHTD. 124–130 contacts ATP; that stretch reads GAGLSSS. The Mg(2+) site is built by Ser130 and Glu162. Asp174 (proton acceptor) is an active-site residue. A substrate-binding site is contributed by Tyr223.

The protein belongs to the GHMP kinase family. GalK subfamily.

It localises to the cytoplasm. It carries out the reaction alpha-D-galactose + ATP = alpha-D-galactose 1-phosphate + ADP + H(+). It functions in the pathway carbohydrate metabolism; galactose metabolism. Catalyzes the transfer of the gamma-phosphate of ATP to D-galactose to form alpha-D-galactose-1-phosphate (Gal-1-P). The chain is Galactokinase from Shigella boydii serotype 18 (strain CDC 3083-94 / BS512).